Reading from the N-terminus, the 319-residue chain is Acetyl-coenzyme A carboxylase carboxyl transferase subunit alpha (319 aa).

Residues 39–293 (RLQKKSNDLT…KAVLEKQLHE (255 aa)) enclose the CoA carboxyltransferase C-terminal domain.

The protein belongs to the AccA family. In terms of assembly, acetyl-CoA carboxylase is a heterohexamer composed of biotin carboxyl carrier protein (AccB), biotin carboxylase (AccC) and two subunits each of ACCase subunit alpha (AccA) and ACCase subunit beta (AccD).

Its subcellular location is the cytoplasm. It catalyses the reaction N(6)-carboxybiotinyl-L-lysyl-[protein] + acetyl-CoA = N(6)-biotinyl-L-lysyl-[protein] + malonyl-CoA. Its pathway is lipid metabolism; malonyl-CoA biosynthesis; malonyl-CoA from acetyl-CoA: step 1/1. Functionally, component of the acetyl coenzyme A carboxylase (ACC) complex. First, biotin carboxylase catalyzes the carboxylation of biotin on its carrier protein (BCCP) and then the CO(2) group is transferred by the carboxyltransferase to acetyl-CoA to form malonyl-CoA. The chain is Acetyl-coenzyme A carboxylase carboxyl transferase subunit alpha from Neisseria gonorrhoeae (strain ATCC 700825 / FA 1090).